The primary structure comprises 360 residues: DnaJ homolog subfamily C member 25 (360 aa).

A helical membrane pass occupies residues 20-40 (WMLLAPLLPALLLVRPAGALV). Residues 49–124 (DCYEVLGVSR…ETRKDYDYML (76 aa)) enclose the J domain. The next 2 membrane-spanning stretches (helical) occupy residues 150-170 (VVIL…WWNS) and 244-264 (LLLF…VWYC).

This sequence belongs to the DNAJC25 family.

It is found in the membrane. The protein is DnaJ homolog subfamily C member 25 (DNAJC25) of Homo sapiens (Human).